The primary structure comprises 242 residues: N-alpha-acetyltransferase 60 (242 aa).

Residues 1–192 are Cytoplasmic-facing; sequence MSEEERPAAL…GGHPPWTVMD (192 aa). Residues 13–182 form the N-acetyltransferase domain; sequence TILRFLCHDD…DAYTYVLYLN (170 aa). Y38 is a binding site for substrate. Residue Y97 is part of the active site. L99 is a substrate binding site. Acetyl-CoA-binding positions include 101–103 and 109–114; these read LGV and KQGIGS. Residue H138 is part of the active site. Acetyl-CoA is bound by residues N143 and 150–153; that span reads YENR. The required for homodimerization stretch occupies residues 162 to 173; it reads PYYYSIRGVLQD. Substrate is bound at residue Y165. An intramembrane region (helical) is located at residues 193–236; sequence YLQHLGSALAGFSPCTLPQRIYRQAHTLLRSLLPWSSISAKSGI. The Cytoplasmic segment spans residues 237–242; the sequence is EYSRTM.

It belongs to the acetyltransferase family. NAA60 subfamily. In terms of assembly, monomer and homodimer; monomer in presence of substrate and homodimer in its absence.

It localises to the golgi apparatus membrane. It catalyses the reaction N-terminal L-methionyl-[transmembrane protein] + acetyl-CoA = N-terminal N(alpha)-acetyl-L-methionyl-[transmembrane protein] + CoA + H(+). The enzyme catalyses L-lysyl-[protein] + acetyl-CoA = N(6)-acetyl-L-lysyl-[protein] + CoA + H(+). N-alpha-acetyltransferase that specifically mediates the acetylation of N-terminal residues of the transmembrane proteins, with a strong preference for N-termini facing the cytosol. Displays N-terminal acetyltransferase activity towards a range of N-terminal sequences including those starting with Met-Lys, Met-Val, Met-Ala and Met-Met. Required for normal chromosomal segregation during anaphase. May also show histone acetyltransferase activity; such results are however unclear in vivo and would require additional experimental evidences. This chain is N-alpha-acetyltransferase 60 (naa60), found in Xenopus tropicalis (Western clawed frog).